Consider the following 96-residue polypeptide: Large ribosomal subunit protein bL27 (96 aa).

Positions 1-10 (MLLKLNIQLF) are excised as a propeptide.

Belongs to the bacterial ribosomal protein bL27 family. Post-translationally, the N-terminus is cleaved by ribosomal processing cysteine protease Prp.

In Phytoplasma mali (strain AT), this protein is Large ribosomal subunit protein bL27.